We begin with the raw amino-acid sequence, 120 residues long: Large ribosomal subunit protein bL20 (120 aa).

It belongs to the bacterial ribosomal protein bL20 family.

Binds directly to 23S ribosomal RNA and is necessary for the in vitro assembly process of the 50S ribosomal subunit. It is not involved in the protein synthesizing functions of that subunit. The sequence is that of Large ribosomal subunit protein bL20 from Ureaplasma urealyticum serovar 10 (strain ATCC 33699 / Western).